Consider the following 325-residue polypeptide: Ferrochelatase (325 aa).

Residues histidine 195 and glutamate 276 each contribute to the Fe cation site.

The protein belongs to the ferrochelatase family.

Its subcellular location is the cytoplasm. The catalysed reaction is heme b + 2 H(+) = protoporphyrin IX + Fe(2+). It functions in the pathway porphyrin-containing compound metabolism; protoheme biosynthesis; protoheme from protoporphyrin-IX: step 1/1. Functionally, catalyzes the ferrous insertion into protoporphyrin IX. This chain is Ferrochelatase, found in Methylococcus capsulatus (strain ATCC 33009 / NCIMB 11132 / Bath).